We begin with the raw amino-acid sequence, 105 residues long: Gastrin/cholecystokinin-like peptide (105 aa).

The first 20 residues, 1-20, serve as a signal peptide directing secretion; that stretch reads MKTKVFLGLILSAAVTACLC. Positions 21 to 38 are excised as a propeptide; it reads RPAAKAPGGSHRPTSSLA. The tract at residues 24–51 is disordered; the sequence is AKAPGGSHRPTSSLARRDWPEPPSQEQQ. Tyr87 bears the Sulfotyrosine mark. At Phe93 the chain carries Phenylalanine amide. Positions 97-105 are excised as a propeptide; the sequence is STEDAADAA.

It belongs to the gastrin/cholecystokinin family.

The protein resides in the secreted. Its function is as follows. Potent stimulus of gastric acid, but not of pancreatic secretion. This chain is Gastrin/cholecystokinin-like peptide, found in Gallus gallus (Chicken).